A 451-amino-acid chain; its full sequence is PTS system cellobiose-specific EIIC component (451 aa).

One can recognise a PTS EIIC type-3 domain in the interval 8-423; sequence LEDRVMPVAG…FIAFAIYYPF (416 aa). The next 10 membrane-spanning stretches (helical) occupy residues 31–51, 72–92, 104–124, 138–158, 187–207, 227–247, 250–270, 293–313, 347–367, and 407–427; these read GIIL…VGFL, LLYP…FGVA, LSAG…QVPF, GIPV…LAIV, FVAL…RLIL, LSVL…VQLL, TGLH…LSLM, FFDL…ALTM, IVMN…LVVV, and ILQI…FSIW.

It localises to the cell membrane. Functionally, the phosphoenolpyruvate-dependent sugar phosphotransferase system (sugar PTS), a major carbohydrate active transport system, catalyzes the phosphorylation of incoming sugar substrates concomitantly with their translocation across the cell membrane. The enzyme II CelABD PTS system is involved in cellobiose transport. In Geobacillus stearothermophilus (Bacillus stearothermophilus), this protein is PTS system cellobiose-specific EIIC component.